The chain runs to 341 residues: Methionine import ATP-binding protein MetN 2 (341 aa).

The region spanning 2-241 is the ABC transporter domain; it reads IELKEVVKEY…PQHTVTKRFV (240 aa). 38 to 45 serves as a coordination point for ATP; it reads GFSGAGKS.

It belongs to the ABC transporter superfamily. Methionine importer (TC 3.A.1.24) family. The complex is composed of two ATP-binding proteins (MetN), two transmembrane proteins (MetI) and a solute-binding protein (MetQ).

Its subcellular location is the cell membrane. It carries out the reaction L-methionine(out) + ATP + H2O = L-methionine(in) + ADP + phosphate + H(+). It catalyses the reaction D-methionine(out) + ATP + H2O = D-methionine(in) + ADP + phosphate + H(+). Its function is as follows. Part of the ABC transporter complex MetNIQ involved in methionine import. Responsible for energy coupling to the transport system. This chain is Methionine import ATP-binding protein MetN 2, found in Staphylococcus aureus (strain N315).